The following is a 118-amino-acid chain: Large ribosomal subunit protein uL22 (118 aa).

It belongs to the universal ribosomal protein uL22 family. Part of the 50S ribosomal subunit.

Functionally, this protein binds specifically to 23S rRNA; its binding is stimulated by other ribosomal proteins, e.g. L4, L17, and L20. It is important during the early stages of 50S assembly. It makes multiple contacts with different domains of the 23S rRNA in the assembled 50S subunit and ribosome. In terms of biological role, the globular domain of the protein is located near the polypeptide exit tunnel on the outside of the subunit, while an extended beta-hairpin is found that lines the wall of the exit tunnel in the center of the 70S ribosome. This is Large ribosomal subunit protein uL22 from Leuconostoc citreum (strain KM20).